Here is a 320-residue protein sequence, read N- to C-terminus: Aldose reductase (320 aa).

The active-site Proton donor is the Tyr-60. His-121 contributes to the substrate binding site. 215-269 (SPLGSSEKNLAHDPVVEKVANKLNKTPGQVLIKWALQRGTSVIPKSSKDERIKEN) contacts NADP(+).

The protein belongs to the aldo/keto reductase family.

It carries out the reaction an alditol + NAD(+) = an aldose + NADH + H(+). It catalyses the reaction an alditol + NADP(+) = an aldose + NADPH + H(+). The sequence is that of Aldose reductase from Hordeum vulgare (Barley).